We begin with the raw amino-acid sequence, 194 residues long: Protein PHLOEM PROTEIN 2-LIKE A2 (194 aa).

A helical membrane pass occupies residues 49–71 (VTFVFFCFFKISLNSAYLYTLYS).

Vascular tissues, specifically in phloem companion cell-sieve element complexes.

The protein resides in the membrane. The polypeptide is Protein PHLOEM PROTEIN 2-LIKE A2 (PP2A2) (Arabidopsis thaliana (Mouse-ear cress)).